We begin with the raw amino-acid sequence, 195 residues long: Small ribosomal subunit protein uS4c (195 aa).

In terms of domain architecture, S4 RNA-binding spans 82-143 (MRLDNILFRL…KQRSKALIQN (62 aa)).

It belongs to the universal ribosomal protein uS4 family. As to quaternary structure, part of the 30S ribosomal subunit. Contacts protein S5. The interaction surface between S4 and S5 is involved in control of translational fidelity.

Its subcellular location is the plastid. It is found in the chloroplast. In terms of biological role, one of the primary rRNA binding proteins, it binds directly to 16S rRNA where it nucleates assembly of the body of the 30S subunit. Its function is as follows. With S5 and S12 plays an important role in translational accuracy. The protein is Small ribosomal subunit protein uS4c (rps4) of Pillansia templemannii.